The primary structure comprises 388 residues: Granulocyte-macrophage colony-stimulating factor receptor subunit alpha (388 aa).

An N-terminal signal peptide occupies residues 1–29 (MTSSHAMNITPLAQLALLFSTLLLPGTQA). The Extracellular segment spans residues 30-327 (LLAPTTPDAG…PLEAEDTRVP (298 aa)). 6 N-linked (GlcNAc...) asparagine glycosylation sites follow: N43, N63, N106, N132, N165, and N237. The Fibronectin type-III domain maps to 228–324 (PPRDVTASCN…PAHPLEAEDT (97 aa)). The WSXWS motif signature appears at 310–314 (WGEWS). The helical transmembrane segment at 328-348 (GALLYAVTACAVLLCALALGV) threads the bilayer. Residues 349-388 (TCRRFEVTRRLFPPIPGIRDKVSDDVRVNPETLRKDLLQP) are Cytoplasmic-facing. The short motif at 359-367 (LFPPIPGIR) is the Box 1 motif element.

Belongs to the type I cytokine receptor family. Type 5 subfamily. As to quaternary structure, heterodimer of an alpha and a beta subunit. The beta subunit is common to the IL3, IL5 and GM-CSF receptors. The signaling GM-CSF receptor complex is a dodecamer of two head-to-head hexamers of two alpha, two beta, and two ligand subunits.

Its subcellular location is the membrane. Functionally, low affinity receptor for granulocyte-macrophage colony-stimulating factor. Transduces a signal that results in the proliferation, differentiation, and functional activation of hematopoietic cells. The polypeptide is Granulocyte-macrophage colony-stimulating factor receptor subunit alpha (Csf2ra) (Mus musculus (Mouse)).